A 554-amino-acid polypeptide reads, in one-letter code: Formate--tetrahydrofolate ligase (554 aa).

ATP is bound at residue 65-72 (TPLGEGKT).

Belongs to the formate--tetrahydrofolate ligase family.

The catalysed reaction is (6S)-5,6,7,8-tetrahydrofolate + formate + ATP = (6R)-10-formyltetrahydrofolate + ADP + phosphate. It functions in the pathway one-carbon metabolism; tetrahydrofolate interconversion. In Aliivibrio salmonicida (strain LFI1238) (Vibrio salmonicida (strain LFI1238)), this protein is Formate--tetrahydrofolate ligase.